The sequence spans 297 residues: HTH-type transcriptional regulator ArgP (297 aa).

Residues 4 to 60 (PDYRTLQALDAVIRERGFERAAQKLCITQSAVSQRIKQLENMFGQPLLVRTVPPRPT) form the HTH lysR-type domain. Residues 21-40 (FERAAQKLCITQSAVSQRIK) constitute a DNA-binding region (H-T-H motif).

It belongs to the LysR transcriptional regulatory family. Homodimer.

In terms of biological role, controls the transcription of genes involved in arginine and lysine metabolism. This Salmonella typhi protein is HTH-type transcriptional regulator ArgP.